Consider the following 868-residue polypeptide: Leucine--tRNA ligase (868 aa).

The 'HIGH' region motif lies at 42–52 (PYPSGKLHMGH). The 'KMSKS' region signature appears at 627–631 (KMAKS). ATP is bound at residue lysine 630.

The protein belongs to the class-I aminoacyl-tRNA synthetase family.

Its subcellular location is the cytoplasm. The enzyme catalyses tRNA(Leu) + L-leucine + ATP = L-leucyl-tRNA(Leu) + AMP + diphosphate. The polypeptide is Leucine--tRNA ligase (Pseudomonas fluorescens (strain Pf0-1)).